The chain runs to 1057 residues: FERKNFSDGLVPQRKFIHIGTTSTNNEPRIPLHNLMTTRPSVDIFPEDQYEPNAAATLSRVPCTVCGRSFNSKRGLGVHMRSRHPDELDEERRRVDIKARWSDEEKWMMARKEVELTANGCKHINKQLAVYFANRSVEAIKKLRQRGDYKEKIEQIRGQSALAPEVANLTIRRRPSRSEQDHQVTTSETTPITPFEQSNREILRTLRGYSPVECHSKWRAQELQTIIDRAHLEGKETTLQCLSLYLLGIFPAQGVRHTLTRPPRRPRNRRESRRQQYAVVQRNWDKHKGRCIKSLLNGTDESVMPSQEIMVPYWREVMTQPSPSSCSGEVIQMDHSLERVWSAITEQDLRASRVSLSSSPGPDGITPKSAREVPSGIMLRIMNLILWCGNLPHSIRLARTVFIPKTVTAKRPQDFRPISVPSVLVRQLNAILATRLNSSINWDPRQRGFLPTDGCADNATIVDLVLRHSHKHFRSCYIANLDVSKAFDSLSHASIYDTLRAYGAPKGFVDYVQNTYEGGGTSLNGDGWSSEEFVPARGVKQGDPLSPILFNLVMDRLLRTLPSEIGAKVGNAITNAAAFADDLVLFAETRMGLQVLLDKTLDFLSIVGLKLNADKCFTVGIKGQPKQKCTVLEAQSFYVGSSEIPSLKRTDEWKYLGINFTATGRVRCNPAEDIGPKLQRLTKAPLKPQQRLFALRTVLIPQLYHKLALGSVAIGVLRKTDKLIRYYVRRWLNLPLDVPIAFVHAPPKSGGLGIPSLRWVAPMLRLRRLSNIKWPHLTQNEVASSFLEAEKQRARDRLLAEQNELLSRPAIEKYWANKLYLSVDGSGLREGGHYGPQHGWVSQPTRLLTGKEYMDGIRLRINALPTKSRTTRGRHELERQCRAGCDAPETTNHIMQKCYRSHGRRVARHNCVVNRIKRGLEERGCVVIVEPSLQCESGLNKPDLVALRQNHIDVIDTQIVTDGHSMDDAHQRKINRYDRPDIRTELRRRFEAAGDIEFHSATLNWRGIWSGQSVKRLIAKGLLSKYDSHIISVQVMRGSLGCFKQFMYLSGFSRDWT.

The segment at 61–84 (VPCTVCGRSFNSKRGLGVHMRSRH) adopts a C2H2-type zinc-finger fold. Positions 173-195 (RRPSRSEQDHQVTTSETTPITPF) are disordered. Residues 183 to 195 (QVTTSETTPITPF) show a composition bias toward polar residues. Residues 384–660 (LILWCGNLPH…DEWKYLGINF (277 aa)) enclose the Reverse transcriptase domain.

The enzyme catalyses DNA(n) + a 2'-deoxyribonucleoside 5'-triphosphate = DNA(n+1) + diphosphate. This is Retrovirus-related Pol polyprotein from type-2 retrotransposable element R2DM (pol) from Drosophila melanogaster (Fruit fly).